The chain runs to 446 residues: Trigger factor (446 aa).

The region spanning 161 to 246 is the PPIase FKBP-type domain; sequence GDRLTIDFKG…VSKVERSELP (86 aa). Residues 422 to 446 form a disordered region; it reads VSYEDAVKPRTAPAEQAEDGEQSAE. Residues 437-446 are compositionally biased toward acidic residues; that stretch reads QAEDGEQSAE.

Belongs to the FKBP-type PPIase family. Tig subfamily.

Its subcellular location is the cytoplasm. The enzyme catalyses [protein]-peptidylproline (omega=180) = [protein]-peptidylproline (omega=0). Involved in protein export. Acts as a chaperone by maintaining the newly synthesized protein in an open conformation. Functions as a peptidyl-prolyl cis-trans isomerase. This Hahella chejuensis (strain KCTC 2396) protein is Trigger factor.